The chain runs to 135 residues: Large ribosomal subunit protein uL22 (135 aa).

It belongs to the universal ribosomal protein uL22 family. Part of the 50S ribosomal subunit.

This protein binds specifically to 23S rRNA; its binding is stimulated by other ribosomal proteins, e.g. L4, L17, and L20. It is important during the early stages of 50S assembly. It makes multiple contacts with different domains of the 23S rRNA in the assembled 50S subunit and ribosome. Its function is as follows. The globular domain of the protein is located near the polypeptide exit tunnel on the outside of the subunit, while an extended beta-hairpin is found that lines the wall of the exit tunnel in the center of the 70S ribosome. In Malacoplasma penetrans (strain HF-2) (Mycoplasma penetrans), this protein is Large ribosomal subunit protein uL22.